The sequence spans 286 residues: Pantothenate synthetase (286 aa).

31–38 (MGALHEGH) contacts ATP. Catalysis depends on histidine 38, which acts as the Proton donor. Glutamine 65 serves as a coordination point for (R)-pantoate. Glutamine 65 serves as a coordination point for beta-alanine. 153-156 (GEKD) is a binding site for ATP. Glutamine 159 contributes to the (R)-pantoate binding site. 190 to 193 (LSSR) lines the ATP pocket.

Belongs to the pantothenate synthetase family. As to quaternary structure, homodimer.

Its subcellular location is the cytoplasm. It carries out the reaction (R)-pantoate + beta-alanine + ATP = (R)-pantothenate + AMP + diphosphate + H(+). The protein operates within cofactor biosynthesis; (R)-pantothenate biosynthesis; (R)-pantothenate from (R)-pantoate and beta-alanine: step 1/1. In terms of biological role, catalyzes the condensation of pantoate with beta-alanine in an ATP-dependent reaction via a pantoyl-adenylate intermediate. The sequence is that of Pantothenate synthetase from Corynebacterium diphtheriae (strain ATCC 700971 / NCTC 13129 / Biotype gravis).